The primary structure comprises 130 residues: Protein ApaG (130 aa).

In terms of domain architecture, ApaG spans 3–127; the sequence is SQTTRDIEVT…FSLDSPHEKP (125 aa).

This chain is Protein ApaG, found in Paramagnetospirillum magneticum (strain ATCC 700264 / AMB-1) (Magnetospirillum magneticum).